Reading from the N-terminus, the 501-residue chain is Armadillo repeat-containing protein 6 (501 aa).

The residue at position 64 (S64) is a Phosphoserine. ARM repeat units lie at residues 220–264, 274–318, 319–369, and 370–412; these read GVLP…HAHN, KGLK…DLGG, LSIL…RAGG, and TESI…VEGG. A Pros-methylhistidine modification is found at H263.

The protein belongs to the ARMC6 family. Methylated at His-263 by METTL9.

The protein is Armadillo repeat-containing protein 6 (ARMC6) of Homo sapiens (Human).